Consider the following 629-residue polypeptide: DNA-directed RNA polymerase subunit beta' (629 aa).

Residues cysteine 70, cysteine 72, cysteine 85, and cysteine 88 each contribute to the Zn(2+) site. Residues aspartate 472, aspartate 474, and aspartate 476 each coordinate Mg(2+).

It belongs to the RNA polymerase beta' chain family. RpoC1 subfamily. As to quaternary structure, in plastids the minimal PEP RNA polymerase catalytic core is composed of four subunits: alpha, beta, beta', and beta''. When a (nuclear-encoded) sigma factor is associated with the core the holoenzyme is formed, which can initiate transcription. Mg(2+) serves as cofactor. The cofactor is Zn(2+).

It localises to the plastid. The protein localises to the chloroplast. It carries out the reaction RNA(n) + a ribonucleoside 5'-triphosphate = RNA(n+1) + diphosphate. DNA-dependent RNA polymerase catalyzes the transcription of DNA into RNA using the four ribonucleoside triphosphates as substrates. In Porphyra purpurea (Red seaweed), this protein is DNA-directed RNA polymerase subunit beta'.